Consider the following 474-residue polypeptide: Synaptotagmin-15B (474 aa).

Disordered regions lie at residues 1–62 (MGVV…AASG) and 75–128 (PRAA…PPAV). The span at 75-88 (PRAAAGHQQHHGPP) shows a compositional bias: low complexity. C2 domains are found at residues 200 to 317 (CLGR…RRVI) and 331 to 452 (EFGD…EHWD).

This sequence belongs to the synaptotagmin family.

This Homo sapiens (Human) protein is Synaptotagmin-15B.